Here is a 351-residue protein sequence, read N- to C-terminus: Phosphate acyltransferase (351 aa).

The protein belongs to the PlsX family. Homodimer. Probably interacts with PlsY.

Its subcellular location is the cytoplasm. The catalysed reaction is a fatty acyl-[ACP] + phosphate = an acyl phosphate + holo-[ACP]. Its pathway is lipid metabolism; phospholipid metabolism. Its function is as follows. Catalyzes the reversible formation of acyl-phosphate (acyl-PO(4)) from acyl-[acyl-carrier-protein] (acyl-ACP). This enzyme utilizes acyl-ACP as fatty acyl donor, but not acyl-CoA. This is Phosphate acyltransferase from Neisseria meningitidis serogroup A / serotype 4A (strain DSM 15465 / Z2491).